The sequence spans 438 residues: Cyclic 2,3-diphosphoglycerate synthetase (438 aa).

It belongs to the cyclic 2,3-diphosphoglycerate synthetase family.

Its subcellular location is the cytoplasm. It carries out the reaction (2R)-2,3-bisphosphoglycerate + ATP + H(+) = cyclic (2R)-2,3-bisphosphoglycerate + ADP + phosphate. Functionally, catalyzes the formation of cyclic 2,3-diphosphoglycerate (cDPG) by formation of an intramolecular phosphoanhydride bond at the expense of ATP. This is Cyclic 2,3-diphosphoglycerate synthetase from Thermococcus gammatolerans (strain DSM 15229 / JCM 11827 / EJ3).